Here is a 477-residue protein sequence, read N- to C-terminus: PTS system glucose-specific EIICB component (477 aa).

Topologically, residues 1-14 (MFKNAFANLQKVGK) are cytoplasmic. Residues 1 to 388 (MFKNAFANLQ…LDLKTPGRED (388 aa)) form the PTS EIIC type-1 domain. The helical transmembrane segment at 15–35 (SLMLPVSVLPIAGILLGVGSA) threads the bilayer. Over 36-50 (NFSWLPAVVSHVMAE) the chain is Periplasmic. The chain crosses the membrane as a helical span at residues 51–71 (AGGSVFANMPLIFAIGVALGF). Residues 72–79 (TNNDGVSA) lie on the Cytoplasmic side of the membrane. A helical transmembrane segment spans residues 80–100 (LAAVVAYGIMVKTMAVVAPLV). The Periplasmic segment spans residues 101–111 (LHLPAEEIAAK). The helical transmembrane segment at 112-132 (HLADTGVLGGIISGAIAAYMF) threads the bilayer. Over 133–151 (NRFYRIKLPEYLGFFAGKR) the chain is Cytoplasmic. A helical transmembrane segment spans residues 152–172 (FVPIISGLAAIFTGVVLSFVW). The Periplasmic segment spans residues 173–190 (PPIGTAIQAFSQWAAYQN). Residues 191–211 (PVVAFGIYGFIERCLVPFGLH) traverse the membrane as a helical segment. Over 212–248 (HIWNVPFQMQIGEYTNAAGQVFHGDIPRYMAGDPTAG) the chain is Cytoplasmic. The chain crosses the membrane as a helical span at residues 249 to 269 (MLSGGFLFKMYGLPAAAIAIW). Topologically, residues 270–279 (HSAKPENRAK) are periplasmic. Residues 280–300 (VGGIMISAALTSFLTGITEPI) traverse the membrane as a helical segment. Residues 301-309 (EFSFMFVAP) lie on the Cytoplasmic side of the membrane. The chain crosses the membrane as a helical span at residues 310–330 (ILYIIHAILAGLAFPICILLG). At 331–355 (MRDGTSFSHGLIDFIVLSGNSSKLW) the chain is on the periplasmic side. Residues 356-376 (LFPIVGAGYAIVYYTVFRVLI) traverse the membrane as a helical segment. Residues 377–477 (KALDLKTPGR…TEMDEYIRNS (101 aa)) are Cytoplasmic-facing. Residues 399–477 (SEMAPALVAA…TEMDEYIRNS (79 aa)) form the PTS EIIB type-1 domain. The active-site Phosphocysteine intermediate; for EIIB activity is the Cys421. Cys421 carries the post-translational modification Phosphocysteine.

The protein resides in the cell inner membrane. The catalysed reaction is N(pros)-phospho-L-histidyl-[protein] + D-glucose(out) = D-glucose 6-phosphate(in) + L-histidyl-[protein]. In terms of biological role, the phosphoenolpyruvate-dependent sugar phosphotransferase system (sugar PTS), a major carbohydrate active transport system, catalyzes the phosphorylation of incoming sugar substrates concomitantly with their translocation across the cell membrane. The enzyme II complex composed of PtsG and Crr is involved in glucose transport. Also functions as a chemoreceptor monitoring the environment for changes in sugar concentration. It can also phosphorylate mannose, methyl alpha-glucoside and 2-deoxy-glucose. The polypeptide is PTS system glucose-specific EIICB component (ptsG) (Salmonella typhimurium (strain LT2 / SGSC1412 / ATCC 700720)).